Here is a 548-residue protein sequence, read N- to C-terminus: Glucose-6-phosphate isomerase (548 aa).

Glutamate 359 serves as the catalytic Proton donor. Catalysis depends on residues histidine 390 and lysine 510.

Belongs to the GPI family.

It is found in the cytoplasm. It carries out the reaction alpha-D-glucose 6-phosphate = beta-D-fructose 6-phosphate. The protein operates within carbohydrate biosynthesis; gluconeogenesis. It participates in carbohydrate degradation; glycolysis; D-glyceraldehyde 3-phosphate and glycerone phosphate from D-glucose: step 2/4. Functionally, catalyzes the reversible isomerization of glucose-6-phosphate to fructose-6-phosphate. This Gloeobacter violaceus (strain ATCC 29082 / PCC 7421) protein is Glucose-6-phosphate isomerase.